Consider the following 483-residue polypeptide: tRNA sulfurtransferase (483 aa).

One can recognise a THUMP domain in the interval 63–167 (GQLIDMLART…DDQVYLVTKK (105 aa)). Residues 185–186 (LI), Lys-267, Gly-289, and Gln-298 each bind ATP. Cys-346 and Cys-457 are oxidised to a cystine. Residues 405–483 (LPVSAKVIDI…GYTNVGVYRP (79 aa)) form the Rhodanese domain. The Cysteine persulfide intermediate role is filled by Cys-457.

Belongs to the ThiI family.

The protein resides in the cytoplasm. The enzyme catalyses [ThiI sulfur-carrier protein]-S-sulfanyl-L-cysteine + a uridine in tRNA + 2 reduced [2Fe-2S]-[ferredoxin] + ATP + H(+) = [ThiI sulfur-carrier protein]-L-cysteine + a 4-thiouridine in tRNA + 2 oxidized [2Fe-2S]-[ferredoxin] + AMP + diphosphate. The catalysed reaction is [ThiS sulfur-carrier protein]-C-terminal Gly-Gly-AMP + S-sulfanyl-L-cysteinyl-[cysteine desulfurase] + AH2 = [ThiS sulfur-carrier protein]-C-terminal-Gly-aminoethanethioate + L-cysteinyl-[cysteine desulfurase] + A + AMP + 2 H(+). The protein operates within cofactor biosynthesis; thiamine diphosphate biosynthesis. In terms of biological role, catalyzes the ATP-dependent transfer of a sulfur to tRNA to produce 4-thiouridine in position 8 of tRNAs, which functions as a near-UV photosensor. Also catalyzes the transfer of sulfur to the sulfur carrier protein ThiS, forming ThiS-thiocarboxylate. This is a step in the synthesis of thiazole, in the thiamine biosynthesis pathway. The sulfur is donated as persulfide by IscS. This Saccharophagus degradans (strain 2-40 / ATCC 43961 / DSM 17024) protein is tRNA sulfurtransferase.